The chain runs to 538 residues: Putative outer membrane porin BglH (538 aa).

The signal sequence occupies residues 1 to 25 (MFRRNLITSAILLMAPLAFSAQSLA). The segment at 52 to 82 (KDEEKKKYTPATVNRSVSTNDQGYAANPFPT) is disordered. A compositionally biased stretch (polar residues) spans 62-73 (ATVNRSVSTNDQ).

This sequence belongs to the porin LamB (TC 1.B.3) family.

It localises to the cell outer membrane. In terms of biological role, may be a sugar porin with a broad carbohydrate specificity. In Shigella flexneri serotype 5b (strain 8401), this protein is Putative outer membrane porin BglH (bglH).